Consider the following 46-residue polypeptide: Protein PsbN (46 aa).

Residues 10–30 (VSIAVLTALLGLTGFGIYTAF) traverse the membrane as a helical segment.

The protein belongs to the PsbN family.

The protein localises to the cellular thylakoid membrane. Functionally, may play a role in photosystem I and II biogenesis. The sequence is that of Protein PsbN from Synechococcus sp. (strain RCC307).